The primary structure comprises 248 residues: 3-deoxy-manno-octulosonate cytidylyltransferase 2 (248 aa).

It belongs to the KdsB family.

Its subcellular location is the cytoplasm. The catalysed reaction is 3-deoxy-alpha-D-manno-oct-2-ulosonate + CTP = CMP-3-deoxy-beta-D-manno-octulosonate + diphosphate. It participates in nucleotide-sugar biosynthesis; CMP-3-deoxy-D-manno-octulosonate biosynthesis; CMP-3-deoxy-D-manno-octulosonate from 3-deoxy-D-manno-octulosonate and CTP: step 1/1. Its pathway is bacterial outer membrane biogenesis; lipopolysaccharide biosynthesis. Its function is as follows. Activates KDO (a required 8-carbon sugar) for incorporation into bacterial lipopolysaccharide in Gram-negative bacteria. This Hydrogenovibrio crunogenus (strain DSM 25203 / XCL-2) (Thiomicrospira crunogena) protein is 3-deoxy-manno-octulosonate cytidylyltransferase 2.